The following is a 562-amino-acid chain: NAD-dependent malic enzyme (562 aa).

The Proton donor role is filled by Tyr-101. Position 154 (Arg-154) interacts with NAD(+). Lys-172 (proton acceptor) is an active-site residue. A divalent metal cation is bound by residues Glu-243, Asp-244, and Asp-267. Residues Asp-267 and Asn-415 each contribute to the NAD(+) site.

It belongs to the malic enzymes family. Homotetramer. Mg(2+) is required as a cofactor. Requires Mn(2+) as cofactor.

The enzyme catalyses (S)-malate + NAD(+) = pyruvate + CO2 + NADH. It carries out the reaction oxaloacetate + H(+) = pyruvate + CO2. The sequence is that of NAD-dependent malic enzyme from Shewanella pealeana (strain ATCC 700345 / ANG-SQ1).